Here is a 312-residue protein sequence, read N- to C-terminus: DNA-directed RNA polymerase subunit alpha (312 aa).

Residues 1 to 227 form an alpha N-terminal domain (alpha-NTD) region; the sequence is MNNFYIKCLK…SFFSSLLENK (227 aa). The segment at 243 to 312 is alpha C-terminal domain (alpha-CTD); that stretch reads PKNPHTNIAI…KNKLGIVLSN (70 aa).

The protein belongs to the RNA polymerase alpha chain family. In terms of assembly, in plastids the minimal PEP RNA polymerase catalytic core is composed of four subunits: alpha, beta, beta', and beta''. When a (nuclear-encoded) sigma factor is associated with the core the holoenzyme is formed, which can initiate transcription.

The protein resides in the plastid. It localises to the chloroplast. It carries out the reaction RNA(n) + a ribonucleoside 5'-triphosphate = RNA(n+1) + diphosphate. Its function is as follows. DNA-dependent RNA polymerase catalyzes the transcription of DNA into RNA using the four ribonucleoside triphosphates as substrates. The chain is DNA-directed RNA polymerase subunit alpha from Trieres chinensis (Marine centric diatom).